The sequence spans 149 residues: Large ribosomal subunit protein bL9 (149 aa).

It belongs to the bacterial ribosomal protein bL9 family.

Its function is as follows. Binds to the 23S rRNA. This Glaesserella parasuis serovar 5 (strain SH0165) (Haemophilus parasuis) protein is Large ribosomal subunit protein bL9.